The sequence spans 114 residues: BolA-like protein DDB_G0274169 (114 aa).

Over residues 88-98 (TQWKKNNQTKI) the composition is skewed to polar residues. Residues 88–114 (TQWKKNNQTKINVDDDKSPSCKGGFGK) form a disordered region.

Belongs to the BolA/IbaG family.

The sequence is that of BolA-like protein DDB_G0274169 from Dictyostelium discoideum (Social amoeba).